The primary structure comprises 404 residues: Glucose-1-phosphate adenylyltransferase (404 aa).

Alpha-D-glucose 1-phosphate is bound by residues Y99, G164, 179–180 (EK), and S197.

The protein belongs to the bacterial/plant glucose-1-phosphate adenylyltransferase family. As to quaternary structure, homotetramer.

The catalysed reaction is alpha-D-glucose 1-phosphate + ATP + H(+) = ADP-alpha-D-glucose + diphosphate. It functions in the pathway glycan biosynthesis; glycogen biosynthesis. Its function is as follows. Involved in the biosynthesis of ADP-glucose, a building block required for the elongation reactions to produce glycogen. Catalyzes the reaction between ATP and alpha-D-glucose 1-phosphate (G1P) to produce pyrophosphate and ADP-Glc. This is Glucose-1-phosphate adenylyltransferase from Rhodococcus opacus (strain B4).